A 46-amino-acid chain; its full sequence is Esculentin-1 (46 aa).

Cys-40 and Cys-46 form a disulfide bridge.

It belongs to the frog skin active peptide (FSAP) family. Brevinin subfamily. In terms of tissue distribution, expressed by the skin glands.

The protein localises to the secreted. Its function is as follows. Shows antibacterial activity against representative Gram-negative and Gram-positive bacterial species, and hemolytic activity. The sequence is that of Esculentin-1 from Pelophylax lessonae (Pool frog).